The following is a 386-amino-acid chain: 2-isopropylmalate synthase (386 aa).

The Pyruvate carboxyltransferase domain maps to 15-269 (IRIFDTTLRD…ETNVKTWKLY (255 aa)). 4 residues coordinate a divalent metal cation: Asp24, His207, His209, and Asn243.

This sequence belongs to the alpha-IPM synthase/homocitrate synthase family. Homodimer. Requires a divalent metal cation as cofactor.

The catalysed reaction is 3-methyl-2-oxobutanoate + acetyl-CoA + H2O = (2S)-2-isopropylmalate + CoA + H(+). It functions in the pathway amino-acid biosynthesis; L-leucine biosynthesis; L-leucine from 3-methyl-2-oxobutanoate: step 1/4. Functionally, catalyzes the condensation of the acetyl group of acetyl-CoA with 3-methyl-2-oxobutanoate (2-oxoisovalerate) to form 3-carboxy-3-hydroxy-4-methylpentanoate (2-isopropylmalate). Carries out the first step of the leucine biosynthesis pathway. In Saccharolobus solfataricus (strain ATCC 35092 / DSM 1617 / JCM 11322 / P2) (Sulfolobus solfataricus), this protein is 2-isopropylmalate synthase (leuA).